Here is a 121-residue protein sequence, read N- to C-terminus: Large ribosomal subunit protein uL18 (121 aa).

The protein belongs to the universal ribosomal protein uL18 family. In terms of assembly, part of the 50S ribosomal subunit; part of the 5S rRNA/L5/L18/L25 subcomplex. Contacts the 5S and 23S rRNAs.

Functionally, this is one of the proteins that bind and probably mediate the attachment of the 5S RNA into the large ribosomal subunit, where it forms part of the central protuberance. The chain is Large ribosomal subunit protein uL18 from Desulfotalea psychrophila (strain LSv54 / DSM 12343).